The primary structure comprises 203 residues: Phosphatidylethanolamine N-methyltransferase (203 aa).

The enzyme catalyses a 1,2-diacyl-sn-glycero-3-phosphoethanolamine + S-adenosyl-L-methionine = a 1,2-diacyl-sn-glycero-3-phospho-N-methylethanolamine + S-adenosyl-L-homocysteine + H(+). Its pathway is phospholipid metabolism; phosphatidylcholine biosynthesis. Functionally, this enzyme catalyzes three distinct methylation reactions for converting phosphatidylethanolamine to phosphatidylcholine. The chain is Phosphatidylethanolamine N-methyltransferase (pmtA) from Cereibacter sphaeroides (Rhodobacter sphaeroides).